The following is a 343-amino-acid chain: Lumican (343 aa).

Positions 1–18 (MTLNSLPIFLVLISGIFC) are cleaved as a signal peptide. Q19 bears the Pyrrolidone carboxylic acid mark. Y20 and Y22 each carry sulfotyrosine. Residues 31 to 69 (DPFGPSTAVCAPECNCPLSYPTAMYCDNLKLKTIPIVPS) form the LRRNT domain. LRR repeat units lie at residues 70–91 (GIKYLYLRNNMIEAIEENTFDN), 94–117 (DLQWLILDHNHLENSKIKGRVFSK), 120–140 (NLKKLHINYNNLTEAVGPLPK), 141–162 (TLDDLQLSHNKITKVNPGALEG), 165–186 (NLTVIHLQNNQLKTDSISGAFK), 190–211 (SLLYLDLSFNQLTKLPTGLPHS), 212–232 (LLMLYFDNNQISNIPDEYFQG), and 235–255 (TLQYLRLSHNKLTDSGIPGNV). N91 carries N-linked (GlcNAc...) (keratan sulfate) asparagine glycosylation. Residue N130 is glycosylated (N-linked (GlcNAc...) (keratan sulfate) asparagine). N165 carries an N-linked (GlcNAc...) (keratan sulfate) asparagine glycan. Residue N257 is glycosylated (N-linked (GlcNAc...) (keratan sulfate) asparagine). LRR repeat units follow at residues 260–281 (SLVELDLSFNQLKSIPTVSENL), 282–301 (ENFYLQVNKINKFPLSSFCK), and 310–330 (KITHLRLDGNNLTRADLPQEM). C300 and C333 are joined by a disulfide. Residue N320 is glycosylated (N-linked (GlcNAc...) asparagine).

The protein belongs to the small leucine-rich proteoglycan (SLRP) family. SLRP class II subfamily. Binds to laminin. Contains keratan sulfate. As to expression, cornea and other tissues.

The protein resides in the secreted. The protein localises to the extracellular space. It is found in the extracellular matrix. The polypeptide is Lumican (LUM) (Gallus gallus (Chicken)).